Consider the following 378-residue polypeptide: Aminomethyltransferase (378 aa).

The protein belongs to the GcvT family. The glycine cleavage system is composed of four proteins: P, T, L and H.

It carries out the reaction N(6)-[(R)-S(8)-aminomethyldihydrolipoyl]-L-lysyl-[protein] + (6S)-5,6,7,8-tetrahydrofolate = N(6)-[(R)-dihydrolipoyl]-L-lysyl-[protein] + (6R)-5,10-methylene-5,6,7,8-tetrahydrofolate + NH4(+). Functionally, the glycine cleavage system catalyzes the degradation of glycine. The chain is Aminomethyltransferase from Acidobacterium capsulatum (strain ATCC 51196 / DSM 11244 / BCRC 80197 / JCM 7670 / NBRC 15755 / NCIMB 13165 / 161).